We begin with the raw amino-acid sequence, 137 residues long: Thioredoxin-like protein R548 (137 aa).

Positions 2–137 (SKDSVETNTI…LEKSIVESSQ (136 aa)) constitute a Thioredoxin domain. Catalysis depends on nucleophile residues C61 and C64. C61 and C64 are oxidised to a cystine.

The protein belongs to the thioredoxin family.

Participates in various redox reactions through the reversible oxidation of its active center dithiol to a disulfide and catalyzes dithiol-disulfide exchange reactions. This Acanthamoeba polyphaga mimivirus (APMV) protein is Thioredoxin-like protein R548.